The sequence spans 1330 residues: Nephrocystin-3 (1330 aa).

G2 carries N-myristoyl glycine lipidation. Residues 83 to 207 (ELEYAAAEYE…QRLQAQGIQV (125 aa)) adopt a coiled-coil conformation. TPR repeat units lie at residues 471-504 (IPEE…AHEL), 885-918 (CLLN…KSAM), 920-942 (TEYF…MSCL), 943-976 (ADLY…RETA), 985-1018 (AQSL…SENA), 1027-1060 (AREL…HQKA), 1093-1126 (ARTL…RERV), 1135-1168 (AQSL…RRRA), 1177-1210 (AYTV…RQKS), 1219-1252 (ATAL…YEDS), and 1261-1294 (GETL…KEAE). Residues 1296–1330 (SLLGGKAPSRHSSSGDTFSLKTAHSPNVFLQQGQR) form a disordered region. Positions 1305-1330 (RHSSSGDTFSLKTAHSPNVFLQQGQR) are enriched in polar residues.

Interacts with NPHP1 and INVS/NPHP2. Interacts (when myristoylated) with UNC119 and UNC119B; interaction is required for localization to cilium. Interacts with CEP164. Component of a complex containing at least ANKS6, INVS, NEK8 and NPHP3. ANKS6 may organize complex assembly by linking INVS and NPHP3 to NEK8 and INVS may target the complex to the proximal ciliary axoneme. In terms of tissue distribution, widely expressed at low level. Expressed in heart, placenta, liver, skeletal muscle, kidney and pancreas. Expressed at very low level in brain and lung.

The protein localises to the cell projection. Its subcellular location is the cilium. Functionally, required for normal ciliary development and function. Inhibits disheveled-1-induced canonical Wnt-signaling activity and may also play a role in the control of non-canonical Wnt signaling which regulates planar cell polarity. Probably acts as a molecular switch between different Wnt signaling pathways. Required for proper convergent extension cell movements. The protein is Nephrocystin-3 (NPHP3) of Homo sapiens (Human).